We begin with the raw amino-acid sequence, 88 residues long: Small ribosomal subunit protein bS20 (88 aa).

It belongs to the bacterial ribosomal protein bS20 family.

Its function is as follows. Binds directly to 16S ribosomal RNA. This chain is Small ribosomal subunit protein bS20, found in Rhodospirillum rubrum (strain ATCC 11170 / ATH 1.1.1 / DSM 467 / LMG 4362 / NCIMB 8255 / S1).